A 147-amino-acid polypeptide reads, in one-letter code: Large ribosomal subunit protein uL13 (147 aa).

It belongs to the universal ribosomal protein uL13 family. In terms of assembly, part of the 50S ribosomal subunit.

Its function is as follows. This protein is one of the early assembly proteins of the 50S ribosomal subunit, although it is not seen to bind rRNA by itself. It is important during the early stages of 50S assembly. The polypeptide is Large ribosomal subunit protein uL13 (Pediococcus pentosaceus (strain ATCC 25745 / CCUG 21536 / LMG 10740 / 183-1w)).